The primary structure comprises 161 residues: 2-C-methyl-D-erythritol 2,4-cyclodiphosphate synthase (161 aa).

Residues Asp8 and His10 each coordinate a divalent metal cation. Residues 8-10 and 34-35 contribute to the 4-CDP-2-C-methyl-D-erythritol 2-phosphate site; these read DVH and HS. His42 contacts a divalent metal cation. 4-CDP-2-C-methyl-D-erythritol 2-phosphate is bound by residues 56–58, 61–65, 100–106, 132–135, and Phe139; these read DIG, FPDTD, AQSPKMA, and TTEE.

The protein belongs to the IspF family. As to quaternary structure, homotrimer. Requires a divalent metal cation as cofactor.

The catalysed reaction is 4-CDP-2-C-methyl-D-erythritol 2-phosphate = 2-C-methyl-D-erythritol 2,4-cyclic diphosphate + CMP. The protein operates within isoprenoid biosynthesis; isopentenyl diphosphate biosynthesis via DXP pathway; isopentenyl diphosphate from 1-deoxy-D-xylulose 5-phosphate: step 4/6. Functionally, involved in the biosynthesis of isopentenyl diphosphate (IPP) and dimethylallyl diphosphate (DMAPP), two major building blocks of isoprenoid compounds. Catalyzes the conversion of 4-diphosphocytidyl-2-C-methyl-D-erythritol 2-phosphate (CDP-ME2P) to 2-C-methyl-D-erythritol 2,4-cyclodiphosphate (ME-CPP) with a corresponding release of cytidine 5-monophosphate (CMP). In Clostridioides difficile (strain 630) (Peptoclostridium difficile), this protein is 2-C-methyl-D-erythritol 2,4-cyclodiphosphate synthase.